Here is a 130-residue protein sequence, read N- to C-terminus: Calcitonin gene-related peptide 2 (130 aa).

Residues 1 to 26 (MDFWKFFPFLALSTIWVLCLASSLQA) form the signal peptide. The propeptide occupies 27–82 (APFRSALESSLDLGTLGDQEKHLLLAALMQDYEQMKARKLEQEEQETKGSRVTAQK). C85 and C90 are disulfide-bonded. F120 is modified (phenylalanine amide). A propeptide spanning residues 127 to 130 (DLQA) is cleaved from the precursor.

This sequence belongs to the calcitonin family. As to expression, detected in nerve cells of cerebrum, hippocampus and pons/midbrain in newborns, and only in nerve cells of pons/midbrain in adult.

Its subcellular location is the secreted. CALCB/CGRP2 is a peptide hormone that induces vasodilation mediated by the CALCRL-RAMP1 receptor complex. Dilates a variety of vessels including the coronary, cerebral and systemic vasculature. Its abundance in the CNS also points toward a neurotransmitter or neuromodulator role. This chain is Calcitonin gene-related peptide 2, found in Mus musculus (Mouse).